The primary structure comprises 197 residues: Zinc finger protein 581 (197 aa).

Residues 1 to 10 are compositionally biased toward pro residues; it reads MLVLPSPCPQ. Residues 1-52 form a disordered region; sequence MLVLPSPCPQPLAFSSVETMEGPPRRTCRSPEPGPSSSIGSPQASSPPRPNH. The segment covering 35 to 44 has biased composition (low complexity); sequence PSSSIGSPQA. 4 consecutive C2H2-type zinc fingers follow at residues 87–109, 115–137, 145–167, and 173–196; these read YSCP…SITH, FECD…HSIH, HGCP…SRVH, and FQCP…RWKH.

Its subcellular location is the nucleus. In terms of biological role, may be involved in transcriptional regulation. The polypeptide is Zinc finger protein 581 (ZNF581) (Homo sapiens (Human)).